The sequence spans 162 residues: Caveolin-2 (162 aa).

Residues 1–86 (MGLETEKADV…FEISKYVMYK (86 aa)) are Cytoplasmic-facing. Residue Y19 is modified to Phosphotyrosine; by SRC. Residues S20 and S23 each carry the phosphoserine modification. Residue Y27 is modified to Phosphotyrosine; by SRC. S36 carries the post-translational modification Phosphoserine. The segment at residues 87–107 (FLTVFLAIPLAFIAGILFATL) is an intramembrane region (helical). Over 108-162 (SCLHIWILMPFVKTCLMVLPSVQTIWKSVTDVFIAPLCTSVGRSFSSVSLQLSQD) the chain is Cytoplasmic.

The protein belongs to the caveolin family. In terms of assembly, monomer or homodimer. Interacts with CAV1; the interaction forms a stable heterooligomeric complex that is required for targeting to lipid rafts and for caveolae formation. Tyrosine phosphorylated forms do not form heterooligomers with the Tyr-19-phosphorylated form existing as a monomer or dimer, and the Tyr-27-form as a monomer only. Interacts (tyrosine phosphorylated form) with the SH2 domain-containing proteins, RASA1, NCK1 and SRC. Interacts (tyrosine phosphorylated form) with INSR, the interaction (Tyr-27-phosphorylated form) is increased on insulin stimulation. Interacts (Tyr-19 phosphorylated form) with MAPK1 (phosphorylated form); the interaction, promoted by insulin, leads to nuclear location and MAPK1 activation. Interacts with STAT3; the interaction is increased on insulin-induced tyrosine phosphorylation leading to STAT activation. Phosphorylated on serine and tyrosine residues. CAV1 promotes phosphorylation on Ser-23 which then targets the complex to the plasma membrane, lipid rafts and caveolae. Phosphorylation on Ser-36 appears to modulate mitosis in endothelial cells. Phosphorylation on both Tyr-19 and Tyr-27 is required for insulin-induced 'Ser-727' phosphorylation of STAT3 and its activation. Phosphorylation on Tyr-19 is required for insulin-induced phosphorylation of MAPK1 and DNA binding of STAT3. Tyrosine phosphorylation is induced by both EGF and insulin (By. similarity).

The protein resides in the nucleus. Its subcellular location is the cytoplasm. The protein localises to the golgi apparatus membrane. It localises to the cell membrane. It is found in the membrane. The protein resides in the caveola. May act as a scaffolding protein within caveolar membranes. Interacts directly with G-protein alpha subunits and can functionally regulate their activity. Acts as an accessory protein in conjunction with CAV1 in targeting to lipid rafts and driving caveolae formation. The Ser-36 phosphorylated form has a role in modulating mitosis in endothelial cells. Positive regulator of cellular mitogenesis of the MAPK signaling pathway. Required for the insulin-stimulated nuclear translocation and activation of MAPK1 and STAT3, and the subsequent regulation of cell cycle progression. This chain is Caveolin-2 (CAV2), found in Chlorocebus aethiops (Green monkey).